The primary structure comprises 510 residues: Serine/threonine protein phosphatase 2A 57 kDa regulatory subunit B' kappa isoform (510 aa).

Positions 1–51 (MWKGFLSKLPRKTSASGRGADLDSGQCSNGAGNGNPIQRTSSCGSIPSGRS) are disordered. The span at 25-51 (GQCSNGAGNGNPIQRTSSCGSIPSGRS) shows a compositional bias: polar residues. 2 positions are modified to phosphothreonine: Thr-476 and Thr-493. A Phosphoserine modification is found at Ser-502. Thr-508 carries the post-translational modification Phosphothreonine.

This sequence belongs to the phosphatase 2A regulatory subunit B56 family. In terms of assembly, PP2A consists of a common heteromeric enzyme, composed of a catalytic subunit (subunits C), a constant regulatory subunit (subunit A), and a variety of regulatory subunits such as subunits B (the R2/B/PR55/B55, R3/B''/PR72/PR130/PR59 and R5/B'/B56 families). Interacts with SIT1. In terms of processing, phosphorylated at Thr-476, Thr-493, Ser-502 and Thr-508 by SIT1. In terms of tissue distribution, expressed in root stele and epidermal cells.

It localises to the cytoplasm. The protein localises to the cytosol. The protein resides in the cell membrane. In terms of biological role, b regulatory subunit of phosphatase 2A (PP2A) involved in salt stress response. Under salt stress conditions, required for the catalytic activity of PP2A and the dephosphorylation of SIT1, a negative regulator of salt tolerance. Dephosphorylation of SIT1 turns off salt-induced SIT1 activity directly, which has a positive effect on salt tolerance. This Oryza sativa subsp. japonica (Rice) protein is Serine/threonine protein phosphatase 2A 57 kDa regulatory subunit B' kappa isoform.